A 418-amino-acid polypeptide reads, in one-letter code: MAP kinase-interacting serine/threonine-protein kinase 1 (418 aa).

Positions 1-23 are disordered; that stretch reads MVSSQPVPFDDGGKRRKKKRKTR. The Protein kinase domain occupies 37-321; sequence RLTDELLGEG…AFQVLQHPWL (285 aa). ATP-binding positions include 43–51 and K66; that span reads LGEGAYAKV. D158 serves as the catalytic Proton acceptor. Residues 384–418 form a disordered region; the sequence is PPSKSRLAKRRAQAHARKGGSHPTHSTVTASQGTP. A compositionally biased stretch (basic residues) spans 389-403; it reads RLAKRRAQAHARKGG. The segment covering 406–418 has biased composition (polar residues); the sequence is PTHSTVTASQGTP.

This sequence belongs to the protein kinase superfamily. CAMK Ser/Thr protein kinase family. Requires Mg(2+) as cofactor.

It catalyses the reaction L-seryl-[protein] + ATP = O-phospho-L-seryl-[protein] + ADP + H(+). The enzyme catalyses L-threonyl-[protein] + ATP = O-phospho-L-threonyl-[protein] + ADP + H(+). Functionally, may play a role in the response to environmental stress and cytokines. Appears to regulate translation by phosphorylating EIF4E, thus increasing the affinity of this protein for the 7-methylguanosine-containing mRNA cap. The protein is MAP kinase-interacting serine/threonine-protein kinase 1 (mknk1) of Xenopus laevis (African clawed frog).